The following is a 405-amino-acid chain: L-carnitine CoA-transferase (405 aa).

CoA-binding residues include lysine 97 and arginine 104. Aspartate 169 functions as the Nucleophile in the catalytic mechanism.

Belongs to the CoA-transferase III family. CaiB subfamily. As to quaternary structure, homodimer.

The protein resides in the cytoplasm. The catalysed reaction is crotonobetainyl-CoA + (R)-carnitine = crotonobetaine + (R)-carnitinyl-CoA. The enzyme catalyses 4-(trimethylamino)butanoyl-CoA + (R)-carnitine = (R)-carnitinyl-CoA + 4-(trimethylamino)butanoate. The protein operates within amine and polyamine metabolism; carnitine metabolism. Catalyzes the reversible transfer of the CoA moiety from gamma-butyrobetainyl-CoA to L-carnitine to generate L-carnitinyl-CoA and gamma-butyrobetaine. Is also able to catalyze the reversible transfer of the CoA moiety from gamma-butyrobetainyl-CoA or L-carnitinyl-CoA to crotonobetaine to generate crotonobetainyl-CoA. This chain is L-carnitine CoA-transferase, found in Escherichia coli O139:H28 (strain E24377A / ETEC).